The following is a 262-amino-acid chain: MIDKSAFVHPTAIVEEGASIGANAHIGPFCIVGPHVEIGEGTVLKSHVVVNGHTKIGRDNEIYQFASIGEVNQDLKYAGEPTRVEIGDRNRIRESVTIHRGTVQGGGLTKVGSDNLLMINAHIAHDCTVGNRCILANNATLAGHVSVDDFAIIGGMTAVHQFCIIGAHVMVGGCSGVAQDVPPYVIAQGNHATPFGVNIEGLKRRGFSREAITAIRNAYKLIYRSGKTLDEVKPEIAELAETYPEVKAFTDFFARSTRGLIR.

The protein belongs to the transferase hexapeptide repeat family. LpxA subfamily. In terms of assembly, homotrimer.

It is found in the cytoplasm. The enzyme catalyses a (3R)-hydroxyacyl-[ACP] + UDP-N-acetyl-alpha-D-glucosamine = a UDP-3-O-[(3R)-3-hydroxyacyl]-N-acetyl-alpha-D-glucosamine + holo-[ACP]. It functions in the pathway glycolipid biosynthesis; lipid IV(A) biosynthesis; lipid IV(A) from (3R)-3-hydroxytetradecanoyl-[acyl-carrier-protein] and UDP-N-acetyl-alpha-D-glucosamine: step 1/6. Its function is as follows. Involved in the biosynthesis of lipid A, a phosphorylated glycolipid that anchors the lipopolysaccharide to the outer membrane of the cell. The protein is Acyl-[acyl-carrier-protein]--UDP-N-acetylglucosamine O-acyltransferase of Shigella dysenteriae serotype 1 (strain Sd197).